The chain runs to 313 residues: Dimethyladenosine transferase (313 aa).

The segment at 1–21 (MPKVKSGAIGRRRGRQEQRRE) is disordered. His37, Leu39, Gly64, Glu85, Asp113, and Asn128 together coordinate S-adenosyl-L-methionine.

This sequence belongs to the class I-like SAM-binding methyltransferase superfamily. rRNA adenine N(6)-methyltransferase family. As to quaternary structure, part of the small subunit (SSU) processome, composed of more than 70 proteins and the RNA chaperone small nucleolar RNA (snoRNA) U3.

It is found in the nucleus. The protein localises to the nucleoplasm. Its subcellular location is the nucleolus. It catalyses the reaction adenosine(1779)/adenosine(1780) in 18S rRNA + 4 S-adenosyl-L-methionine = N(6)-dimethyladenosine(1779)/N(6)-dimethyladenosine(1780) in 18S rRNA + 4 S-adenosyl-L-homocysteine + 4 H(+). In terms of biological role, specifically dimethylates two adjacent adenosines in the loop of a conserved hairpin near the 3'-end of 18S rRNA in the 40S particle. Involved in the pre-rRNA processing steps leading to small-subunit rRNA production independently of its RNA-modifying catalytic activity. Part of the small subunit (SSU) processome, first precursor of the small eukaryotic ribosomal subunit. During the assembly of the SSU processome in the nucleolus, many ribosome biogenesis factors, an RNA chaperone and ribosomal proteins associate with the nascent pre-rRNA and work in concert to generate RNA folding, modifications, rearrangements and cleavage as well as targeted degradation of pre-ribosomal RNA by the RNA exosome. In Macaca fascicularis (Crab-eating macaque), this protein is Dimethyladenosine transferase (DIMT1).